The sequence spans 882 residues: DNA mismatch repair protein MutS (882 aa).

An ATP-binding site is contributed by 629 to 636; that stretch reads GPNMGGKS.

Belongs to the DNA mismatch repair MutS family.

In terms of biological role, this protein is involved in the repair of mismatches in DNA. It is possible that it carries out the mismatch recognition step. This protein has a weak ATPase activity. The sequence is that of DNA mismatch repair protein MutS from Ralstonia nicotianae (strain ATCC BAA-1114 / GMI1000) (Ralstonia solanacearum).